The sequence spans 251 residues: Tachykinins (251 aa).

The signal sequence occupies residues 1-21 (MGAPRTCLIFITIQLVSLAYA). The propeptide occupies 22–25 (QEVS). Arginine 36 bears the Arginine amide mark. Residues 39-50 (KYFDEEGIEQFY) constitute a propeptide that is removed on maturation. A Lysine amide modification is found at lysine 61. Residues 65–163 (SLQDILEAPE…MEPEQSNDLD (99 aa)) constitute a propeptide that is removed on maturation. Arginine 176 carries the post-translational modification Arginine amide. A propeptide spanning residues 180–183 (SINN) is cleaved from the precursor. Residue arginine 199 is modified to Arginine amide. A propeptide spanning residues 203-223 (DLKNSNAHEIKFLVDQNGPLP) is cleaved from the precursor. An Arginine amide modification is found at arginine 235. Positions 239–251 (WTDEPSLEMDMPN) are excised as a propeptide.

It belongs to the tachykinin family. In terms of tissue distribution, tachykinin-related peptide 1: Expressed in antennal lobe (AL) and gnathal ganglion (GNG) (at protein level). Expression in AL detected in all animals, in GNG in most animals (at protein level). Not expressed in corpora cardiaca (CC) and corpora allata (CA) (at protein level). Tachykinin-related peptide 2: Expressed in antennal lobe (AL) corpora cardiaca (CC) and corpora allata (CA) with expression detected in few animals (at protein level). Not expressed in gnathal ganglion (GNG) (at protein level). Tachykinin-related peptide 4: Expressed in corpora cardiaca (CC), corpora allata (CA), antennal lobe (AL) and gnathal ganglion (GNG) (at protein level). Expression in AL and GNG detected in most animals, in CC and CA detected in few animals (at protein level). Tachykinin-related peptide 5: Expressed in corpora cardiaca (CC), corpora allata (CA), antennal lobe (AL) and gnathal ganglion (GNG) (at protein level). Expression in CC and CA detected in some animals, in AL and GNG in few animals (at protein level). Tachykinin-related peptide 6: Expressed in antennal lobe (AL) and gnathal ganglion (GNG) (at protein level). Expression in AL detected in all animals, in GNG in some animals (at protein level). Not expressed in corpora cardiaca (CC) and corpora allata (CA) (at protein level).

It localises to the secreted. Its function is as follows. Tachykinins are active peptides which excite neurons, evoke behavioral responses, are potent vasodilators and secretagogues, and contract (directly or indirectly) many smooth muscles. This Agrotis ipsilon (Black cutworm moth) protein is Tachykinins.